Reading from the N-terminus, the 199-residue chain is Recombination protein RecR (199 aa).

A C4-type zinc finger spans residues 57–72 (CQQCRTFTEQNLCAIC). Residues 81–176 (GMICVVEMPV…KVSRIAHGVP (96 aa)) form the Toprim domain.

Belongs to the RecR family.

In terms of biological role, may play a role in DNA repair. It seems to be involved in an RecBC-independent recombinational process of DNA repair. It may act with RecF and RecO. This chain is Recombination protein RecR, found in Psychromonas ingrahamii (strain DSM 17664 / CCUG 51855 / 37).